The following is a 299-amino-acid chain: uncharacterized protein (299 aa).

Residues 1–59 (MDKIHAMQLFIKVAELESFSRAADFFALPKGSVSRQIQALEHQLGTQLLQRTTRRVKLT) form the HTH lysR-type domain. The H-T-H motif DNA-binding region spans 19-38 (FSRAADFFALPKGSVSRQIQ).

The protein belongs to the LysR transcriptional regulatory family.

This is an uncharacterized protein from Escherichia coli (strain K12).